Reading from the N-terminus, the 191-residue chain is Cytochrome b-245 light chain (191 aa).

Over 2 to 7 the chain is Cytoplasmic; that stretch reads GQIEWA. A helical membrane pass occupies residues 8-30; it reads MWANEQALASGLILITGGIVATA. Topologically, residues 31-35 are extracellular; it reads GQFTQ. A helical transmembrane segment spans residues 36-53; that stretch reads WYLGAYSIAAGVLVCLLE. At 54-69 the chain is on the cytoplasmic side; the sequence is YPRGKRSKGSTMERCG. An intramembrane segment occupies 70-80; it reads QKYLTRVVKLF. Over 81–86 the chain is Cytoplasmic; it reads GPLTRN. A helical transmembrane segment spans residues 87–104; the sequence is YYIRAFLHLGLAVPAGFL. A topological domain (extracellular) is located at residue leucine 105. The chain crosses the membrane as a helical span at residues 106 to 126; sequence ATILGTACLAIASGIYLLAAI. Topologically, residues 127-191 are cytoplasmic; the sequence is RGEQWSPIEP…NPMPVNDEVV (65 aa). Residues 134–191 are disordered; it reads IEPKPKERPQIGGTIKQPPSNPPPRPPAEARKKPSEEAAGVPTGGPQENPMPVNDEVV. The residue at position 147 (threonine 147) is a Phosphothreonine. Lysine 149 is covalently cross-linked (Glycyl lysine isopeptide (Lys-Gly) (interchain with G-Cter in ubiquitin)). The residue at position 168 (serine 168) is a Phosphoserine.

Belongs to the p22phox family. As to quaternary structure, component of the phagocyte NADPH oxidase core complex/cytochrome b558 complex, composed of CYBB (heavy chain (beta)) and CYBA (light chain (alpha)). Component of the phagocyte NADPH oxidase complex composed of an obligatory core heterodimer formed by the membrane proteins CYBA and CYBB and the cytosolic regulatory subunits NCF1/p47-phox, NCF2/p67-phox, NCF4/p40-phox and the small GTPase RAC1 or RAC2. Interacts with NCF1 (via SH3 domain). Interacts with SH3PXD2A. Interacts with DUOX1, DUOX2 and TPO. Interacts with NOX4; this interaction mediates superoxide generation. Interacts with calprotectin (S100A8/9). Interacts with GBP7. Interacts with NOXO1. Forms a heterodimer with NOX3 and is essential for activity and cell membrane localization of NOX3. Interacts with NOX1. Post-translationally, phosphorylation at Thr-147 enhances NADPH oxidase activity by promoting NCF1/p47-phox binding. Ubiquitinated at Lys-149 likely by RNF145.

The protein resides in the cell membrane. Subunit of NADPH oxidase complexes that is required for the NADPH oxidase activity that generates, in various cell types, superoxide from molecular oxygen utilizing NADPH as an electron donor. Subunit of the phagocyte NADPH oxidase complex that mediates the transfer of electrons from cytosolic NADPH to O2 to produce the superoxide anion (O2(-)). In the activated complex, electrons are first transferred from NADPH to flavin adenine dinucleotide (FAD) and subsequently transferred via two heme molecules to molecular oxygen, producing superoxide through an outer-sphere reaction. Activation of the NADPH oxidase complex is initiated by the assembly of cytosolic subunits of the NADPH oxidase complex with the core NADPH oxidase complex to form a complex at the plasma membrane or phagosomal membrane. This activation process is initiated by phosphorylation dependent binding of the cytosolic NCF1/p47-phox subunit to the C-terminus of CYBA/p22-phox. Aassociates with NOX3 to form a functional NADPH oxidase constitutively generating superoxide. The chain is Cytochrome b-245 light chain from Bos taurus (Bovine).